A 357-amino-acid polypeptide reads, in one-letter code: Uroporphyrinogen decarboxylase (357 aa).

Residues 27–31 (RQAGR), aspartate 77, tyrosine 154, serine 209, and histidine 330 contribute to the substrate site.

Belongs to the uroporphyrinogen decarboxylase family. In terms of assembly, homodimer.

It localises to the cytoplasm. It carries out the reaction uroporphyrinogen III + 4 H(+) = coproporphyrinogen III + 4 CO2. It participates in porphyrin-containing compound metabolism; protoporphyrin-IX biosynthesis; coproporphyrinogen-III from 5-aminolevulinate: step 4/4. Functionally, catalyzes the decarboxylation of four acetate groups of uroporphyrinogen-III to yield coproporphyrinogen-III. The polypeptide is Uroporphyrinogen decarboxylase (Acinetobacter baumannii (strain SDF)).